A 55-amino-acid chain; its full sequence is ATP synthase F(0) complex subunit 8 (55 aa).

Residues 7–24 form a helical membrane-spanning segment; sequence NPWFFIMLLSWLTFSLII. A disordered region spans residues 35-55; it reads NPPSNKTTTHTKTTPWTWPWT. A compositionally biased stretch (low complexity) spans 37 to 55; it reads PSNKTTTHTKTTPWTWPWT.

It belongs to the ATPase protein 8 family. Component of the ATP synthase complex composed at least of ATP5F1A/subunit alpha, ATP5F1B/subunit beta, ATP5MC1/subunit c (homooctomer), MT-ATP6/subunit a, MT-ATP8/subunit 8, ATP5ME/subunit e, ATP5MF/subunit f, ATP5MG/subunit g, ATP5MK/subunit k, ATP5MJ/subunit j, ATP5F1C/subunit gamma, ATP5F1D/subunit delta, ATP5F1E/subunit epsilon, ATP5PF/subunit F6, ATP5PB/subunit b, ATP5PD/subunit d, ATP5PO/subunit OSCP. ATP synthase complex consists of a soluble F(1) head domain (subunits alpha(3) and beta(3)) - the catalytic core - and a membrane F(0) domain - the membrane proton channel (subunits c, a, 8, e, f, g, k and j). These two domains are linked by a central stalk (subunits gamma, delta, and epsilon) rotating inside the F1 region and a stationary peripheral stalk (subunits F6, b, d, and OSCP).

It localises to the mitochondrion membrane. Subunit 8, of the mitochondrial membrane ATP synthase complex (F(1)F(0) ATP synthase or Complex V) that produces ATP from ADP in the presence of a proton gradient across the membrane which is generated by electron transport complexes of the respiratory chain. ATP synthase complex consist of a soluble F(1) head domain - the catalytic core - and a membrane F(1) domain - the membrane proton channel. These two domains are linked by a central stalk rotating inside the F(1) region and a stationary peripheral stalk. During catalysis, ATP synthesis in the catalytic domain of F(1) is coupled via a rotary mechanism of the central stalk subunits to proton translocation. In vivo, can only synthesize ATP although its ATP hydrolase activity can be activated artificially in vitro. Part of the complex F(0) domain. In Chaetura pelagica (Chimney swift), this protein is ATP synthase F(0) complex subunit 8.